The following is an 83-amino-acid chain: Erabutoxin c (83 aa).

The signal sequence occupies residues 1 to 21; it reads MKTLLLTLVVVTIVCLDLGYT. Residues 24 to 38 form a loop I region; the sequence is CFNHQSSQPQTTKTC. Intrachain disulfides connect Cys24–Cys45, Cys38–Cys62, Cys64–Cys75, and Cys76–Cys81. A stretch between loop I and loop II region spans residues 39 to 44; that stretch reads SPGESS. The loop II stretch occupies residues 45-62; sequence CYHKQWSDFRGTIIERGC. The segment at 64-75 is loop III; the sequence is CPTVKPGINLSC.

This sequence belongs to the three-finger toxin family. Short-chain subfamily. Type I alpha-neurotoxin sub-subfamily. Expressed by the venom gland.

Its subcellular location is the secreted. Its function is as follows. Binds to muscle nicotinic acetylcholine receptor (nAChR) and inhibit acetylcholine from binding to the receptor, thereby impairing neuromuscular transmission. Binds to Torpedo marmorata nAChR (Kd=0.14 nM). In Laticauda semifasciata (Black-banded sea krait), this protein is Erabutoxin c.